A 115-amino-acid polypeptide reads, in one-letter code: Ribosome-binding factor A (115 aa).

Belongs to the RbfA family. Monomer. Binds 30S ribosomal subunits, but not 50S ribosomal subunits or 70S ribosomes.

Its subcellular location is the cytoplasm. Its function is as follows. One of several proteins that assist in the late maturation steps of the functional core of the 30S ribosomal subunit. Associates with free 30S ribosomal subunits (but not with 30S subunits that are part of 70S ribosomes or polysomes). Required for efficient processing of 16S rRNA. May interact with the 5'-terminal helix region of 16S rRNA. The chain is Ribosome-binding factor A from Staphylococcus carnosus (strain TM300).